We begin with the raw amino-acid sequence, 108 residues long: Thiosulfate sulfurtransferase GlpE (108 aa).

One can recognise a Rhodanese domain in the interval 18–106 (ENEGATLADI…WERSGLPIET (89 aa)). Cys-66 (cysteine persulfide intermediate) is an active-site residue.

It belongs to the GlpE family.

It is found in the cytoplasm. It catalyses the reaction thiosulfate + hydrogen cyanide = thiocyanate + sulfite + 2 H(+). The catalysed reaction is thiosulfate + [thioredoxin]-dithiol = [thioredoxin]-disulfide + hydrogen sulfide + sulfite + 2 H(+). Transferase that catalyzes the transfer of sulfur from thiosulfate to thiophilic acceptors such as cyanide or dithiols. May function in a CysM-independent thiosulfate assimilation pathway by catalyzing the conversion of thiosulfate to sulfite, which can then be used for L-cysteine biosynthesis. The protein is Thiosulfate sulfurtransferase GlpE of Actinobacillus pleuropneumoniae serotype 5b (strain L20).